We begin with the raw amino-acid sequence, 376 residues long: MTETFQFKLLAADGNARRGEVVTPRGTIRTPAFMPVGTVGTVKAMYLDQVRDLGADIILGNTYHLMLRPGAERVARLGGLHKFIRWERPILTDSGGFQVMSLSSLRKLNEQGVTFKSHVDGALYHMSPERSIEIQGLLGSDIQMQLDECVALPAEPDEIERAMEMSLRWAERCKVAFGDQPGKAMFGIVQGGDIPRLRERSALALRDLDLKGYAVGGLAVGEPQEVMLGMLDVTCPVLPADKPRYLMGVGTPDDILKSVAHGIDMFDCVMPTRSGRHGLAFTRYGRINLRNARHAEDTRPLDEQSSCPATRDYSRAYLHHLIRSNESLGGMLLSWNNLAYYQELMAGIRKAIEEGRYTDFMAETMEGWQRGDLPPV.

Residue aspartate 93 is the Proton acceptor of the active site. Substrate-binding positions include 93 to 97, aspartate 147, glutamine 190, and glycine 217; that span reads DSGGF. Positions 248 to 254 are RNA binding; the sequence is GVGTPDD. Aspartate 267 (nucleophile) is an active-site residue. Residues 272-276 are RNA binding; important for wobble base 34 recognition; the sequence is TRSGR.

Belongs to the queuine tRNA-ribosyltransferase family. Homodimer. Within each dimer, one monomer is responsible for RNA recognition and catalysis, while the other monomer binds to the replacement base PreQ1.

It carries out the reaction 7-aminomethyl-7-carbaguanine + guanosine(34) in tRNA = 7-aminomethyl-7-carbaguanosine(34) in tRNA + guanine. It participates in tRNA modification; tRNA-queuosine biosynthesis. Functionally, catalyzes the base-exchange of a guanine (G) residue with the queuine precursor 7-aminomethyl-7-deazaguanine (PreQ1) at position 34 (anticodon wobble position) in tRNAs with GU(N) anticodons (tRNA-Asp, -Asn, -His and -Tyr). Catalysis occurs through a double-displacement mechanism. The nucleophile active site attacks the C1' of nucleotide 34 to detach the guanine base from the RNA, forming a covalent enzyme-RNA intermediate. The proton acceptor active site deprotonates the incoming PreQ1, allowing a nucleophilic attack on the C1' of the ribose to form the product. After dissociation, two additional enzymatic reactions on the tRNA convert PreQ1 to queuine (Q), resulting in the hypermodified nucleoside queuosine (7-(((4,5-cis-dihydroxy-2-cyclopenten-1-yl)amino)methyl)-7-deazaguanosine). In Rhizobium meliloti (strain 1021) (Ensifer meliloti), this protein is Queuine tRNA-ribosyltransferase.